Consider the following 115-residue polypeptide: Evasin P1181 (115 aa).

Positions 1 to 25 (MALNWSFRVIFVSAMWCALLKFATL) are cleaved as a signal peptide. Intrachain disulfides connect C38–C58, C54–C94, C70–C99, and C89–C108. 3 N-linked (GlcNAc...) asparagine glycosylation sites follow: N45, N72, and N103.

Its subcellular location is the secreted. Functionally, salivary chemokine-binding protein which binds to host chemokines CCL3 and CCL4. This chain is Evasin P1181, found in Amblyomma maculatum (Gulf Coast tick).